The following is a 314-amino-acid chain: Olfactory receptor 5P76 (314 aa).

Over 1–28 (MAFLEDGNHTAVTGFILLGLTDDPVLRV) the chain is Extracellular. An N-linked (GlcNAc...) asparagine glycan is attached at asparagine 8. Residues 29–49 (VLFVIILCIYLVTVSGNLSTI) traverse the membrane as a helical segment. Residues 50 to 57 (LLIRVSSQ) lie on the Cytoplasmic side of the membrane. A helical transmembrane segment spans residues 58 to 78 (LHHPMYFFLSHLASADIGYSS). Residues 79 to 102 (SVTPNMLVNFLVERNTISYLGCGI) lie on the Extracellular side of the membrane. An intrachain disulfide couples cysteine 100 to cysteine 192. Residues 103–123 (QLGSAVFFGTVECFLLAAMAY) form a helical membrane-spanning segment. The Cytoplasmic segment spans residues 124–136 (DRFIAICSPLLYS). Residues 137–157 (NKMSTQVCVQLLVGSYIGGFL) form a helical membrane-spanning segment. Residues 158 to 199 (NASSFTLSFFSLVFCGPNRVNHFFCDFAPLVKLSCSDVSVPA) lie on the Extracellular side of the membrane. Residues 200-220 (VVPSFTAGSIIIVTIFVIAVS) traverse the membrane as a helical segment. At 221 to 240 (YIYILITILKMRSTEGRQKA) the chain is on the cytoplasmic side. Residues 241–261 (FSTCTSHLTAVTLFYGTITFI) form a helical membrane-spanning segment. Residues 262 to 274 (YVMPKSSYSTDQN) are Extracellular-facing. The helical transmembrane segment at 275-295 (KVVSVFYMVVVPMLNPLIYSL) threads the bilayer. Residues 296–314 (RNKEIKGALKRQLAKNTFS) lie on the Cytoplasmic side of the membrane.

This sequence belongs to the G-protein coupled receptor 1 family.

It is found in the cell membrane. Potential odorant receptor. The chain is Olfactory receptor 5P76 from Mus musculus (Mouse).